Reading from the N-terminus, the 823-residue chain is Hypoxia-inducible factor 1-alpha (823 aa).

Residues 1–30 are disordered; sequence MEGAGGANDKKKISSERRKEKSRDAARSRR. The tract at residues 1–401 is interaction with TSGA10; it reads MEGAGGANDK…KEPDALTLLA (401 aa). Over residues 8 to 30 the composition is skewed to basic and acidic residues; sequence NDKKKISSERRKEKSRDAARSRR. Residues 17 to 70 form the bHLH domain; it reads RRKEKSRDAARSRRSKESEVFYELAHQLPLPHNVSSHLDKASVMRLTISYLRVR. The segment at 21-30 is DNA-binding; that stretch reads KSRDAARSRR. The 74-residue stretch at 85–158 folds into the PAS 1 domain; the sequence is KAQMNCFYLK…THRNGLVKKG (74 aa). The tract at residues 170 to 191 is required for heterodimer formation with ARNT; sequence RMKCTLTSRGRTMNIKSATWKV. One can recognise a PAS 2 domain in the interval 228-298; it reads PHPSNIEIPL…KTHHDMFTKG (71 aa). Ser-247 is modified (phosphoserine; by CK1). The 44-residue stretch at 302–345 folds into the PAC domain; sequence TGQYRMLAKRGGYVWIETQATVIYNTKNSQPQCIVCVNYVVSGI. Residues 401-600 are ODD; sequence APAAGDTIIS…QSASTNTVFQ (200 aa). Pro-402 is modified (4-hydroxyproline). Residues 494-517 show a composition bias toward polar residues; it reads IQDQPASPSDGSTRQSSPEPNSPS. Residues 494 to 521 form a disordered region; it reads IQDQPASPSDGSTRQSSPEPNSPSEYCF. Residues 531 to 575 form an NTAD region; that stretch reads FKLELVEKLFAEDTEAKNPFSTQDTDLDLEMLAPYIPMDDDFQLR. An N6-acetyllysine; alternate modification is found at Lys-532. Residue Lys-532 forms a Glycyl lysine isopeptide (Lys-Gly) (interchain with G-Cter in ubiquitin); alternate linkage. Glycyl lysine isopeptide (Lys-Gly) (interchain with G-Cter in ubiquitin) cross-links involve residues Lys-538 and Lys-547. Ser-551 carries the post-translational modification Phosphoserine; by GSK3-beta. The residue at position 555 (Thr-555) is a Phosphothreonine; by GSK3-beta. Residue Pro-564 is modified to 4-hydroxyproline. Ser-576 is subject to Phosphoserine; by PLK3. Positions 576–782 are ID; the sequence is SFDQLSPLEN…SDLACRLLGQ (207 aa). Disordered stretches follow at residues 581–602 and 639–685; these read SPLE…FQPT and PSPP…PRSP. Residue Ser-589 is modified to Phosphoserine; by GSK3-beta. Residues 651 to 666 show a composition bias toward polar residues; sequence ATTSPYSDTGSRTASP. A Phosphoserine; by PLK3 modification is found at Ser-654. An N6-acetyllysine modification is found at Lys-706. The short motif at 715–721 is the Nuclear localization signal element; it reads RKRKIEH. The interval 783 to 823 is CTAD; the sequence is SMDESGLPQLTSYDCEVNAPIQGSRNLLQGEELLRALDQVN. Cys-797 carries the post-translational modification S-nitrosocysteine. Residue Asn-800 is modified to (3S)-3-hydroxyasparagine.

As to quaternary structure, interacts with the ARNT; forms a heterodimer that binds core DNA sequence 5'-TACGTG-3' within the hypoxia response element (HRE) of target gene promoters. Interacts with COPS5; the interaction increases the transcriptional activity of HIF1A through increased stability. Interacts with EP300 (via TAZ-type 1 domains); the interaction is stimulated in response to hypoxia and inhibited by CITED2. Interacts with CREBBP (via TAZ-type 1 domains). Interacts with NCOA1, NCOA2, APEX1 and HSP90. Interacts (hydroxylated within the ODD domain) with VHLL (via beta domain); the interaction, leads to polyubiquitination and subsequent HIF1A proteasomal degradation. During hypoxia, sumoylated HIF1A also binds VHL; the interaction promotes the ubiquitination of HIF1A. Interacts with SENP1; the interaction desumoylates HIF1A resulting in stabilization and activation of transcription. Interacts (via the ODD domain) with NAA10; the interaction appears not to acetylate HIF1A nor have any affect on protein stability, during hypoxia. Interacts with RWDD3; the interaction enhances HIF1A sumoylation. Interacts with TSGA10. Interacts with HIF3A. Interacts with RORA (via the DNA binding domain); the interaction enhances HIF1A transcription under hypoxia through increasing protein stability. Interaction with PSMA7 inhibits the transactivation activity of HIF1A under both normoxic and hypoxia-mimicking conditions. Interacts with USP20. Interacts with RACK1; promotes HIF1A ubiquitination and proteasome-mediated degradation. Interacts (via N-terminus) with USP19. Interacts with SIRT2. Interacts (deacetylated form) with EGLN1. Interacts with CBFA2T3. Interacts with HSP90AA1 and HSP90AB1. Interacts with DCUN1D1; this interaction increases the interaction between VHL and DCUN1D1. Interacts with HIF1AN. Post-translationally, S-nitrosylation of Cys-797 may be responsible for increased recruitment of p300 coactivator necessary for transcriptional activity of HIF-1 complex. Acetylation of Lys-532 by ARD1 increases interaction with VHL and stimulates subsequent proteasomal degradation. Deacetylation of Lys-706 by SIRT2 increases its interaction with and hydroxylation by EGLN1 thereby inactivating HIF1A activity by inducing its proteasomal degradation. In terms of processing, ubiquitinated; in normoxia, following hydroxylation and interaction with VHL. Lys-532 appears to be the principal site of ubiquitination. Clioquinol, the Cu/Zn-chelator, inhibits ubiquitination through preventing hydroxylation at Asn-800. Ubiquitinated by E3 ligase VHL. Deubiquitinated by UCHL1. Post-translationally, requires phosphorylation for DNA-binding. Phosphorylation at Ser-247 by CSNK1D/CK1 represses kinase activity and impairs ARNT binding. Phosphorylation by GSK3-beta and PLK3 promote degradation by the proteasome. The iron and 2-oxoglutarate dependent 3-hydroxylation of asparagine is (S) stereospecific within HIF CTAD domains. In terms of processing, sumoylated; with SUMO1 under hypoxia. Sumoylation is enhanced through interaction with RWDD3. Both sumoylation and desumoylation seem to be involved in the regulation of its stability during hypoxia. Sumoylation can promote either its stabilization or its VHL-dependent degradation by promoting hydroxyproline-independent HIF1A-VHL complex binding, thus leading to HIF1A ubiquitination and proteasomal degradation. Desumoylation by SENP1 increases its stability amd transcriptional activity. There is a disaccord between various publications on the effect of sumoylation and desumoylation on its stability and transcriptional activity. Post-translationally, in normoxia, is hydroxylated on Pro-402 and Pro-564 in the oxygen-dependent degradation domain (ODD) by EGLN1/PHD2 and EGLN2/PHD1. EGLN3/PHD3 has also been shown to hydroxylate Pro-564. The hydroxylated prolines promote interaction with VHL, initiating rapid ubiquitination and subsequent proteasomal degradation. Deubiquitinated by USP20. Under hypoxia, proline hydroxylation is impaired and ubiquitination is attenuated, resulting in stabilization. In normoxia, is hydroxylated on Asn-800 by HIF1AN, thus abrogating interaction with CREBBP and EP300 and preventing transcriptional activation. Repressed by iron ion, via Fe(2+) prolyl hydroxylase (PHD) enzymes-mediated hydroxylation and subsequent proteasomal degradation.

The protein resides in the cytoplasm. The protein localises to the nucleus. Induced by reactive oxygen species (ROS). Functionally, functions as a master transcriptional regulator of the adaptive response to hypoxia. Under hypoxic conditions, activates the transcription of over 40 genes, including erythropoietin, glucose transporters, glycolytic enzymes, vascular endothelial growth factor, HILPDA, and other genes whose protein products increase oxygen delivery or facilitate metabolic adaptation to hypoxia. Plays an essential role in embryonic vascularization, tumor angiogenesis and pathophysiology of ischemic disease. Heterodimerizes with ARNT; heterodimer binds to core DNA sequence 5'-TACGTG-3' within the hypoxia response element (HRE) of target gene promoters. Activation requires recruitment of transcriptional coactivators such as CREBBP and EP300. Activity is enhanced by interaction with NCOA1 and/or NCOA2. Interaction with redox regulatory protein APEX1 seems to activate CTAD and potentiates activation by NCOA1 and CREBBP. Involved in the axonal distribution and transport of mitochondria in neurons during hypoxia. In Bos taurus (Bovine), this protein is Hypoxia-inducible factor 1-alpha (HIF1A).